Consider the following 360-residue polypeptide: Vitopine synthase (360 aa).

It belongs to the lysopine/nopaline/octopine/opine/vitopine dehydrogenases family.

This is Vitopine synthase (vis) from Allorhizobium ampelinum (strain ATCC BAA-846 / DSM 112012 / S4) (Agrobacterium vitis (strain S4)).